Here is a 115-residue protein sequence, read N- to C-terminus: uncharacterized protein (115 aa).

Over 1 to 11 (MKLTKEKKNDC) the chain is Cytoplasmic. A helical membrane pass occupies residues 12–32 (LVGVSYIPPLNFFTLTFLFLL). Topologically, residues 33–52 (RIEKVHLSLSLSLSLSLRFY) are extracellular. A helical transmembrane segment spans residues 53 to 73 (YFHNVCYPSLFLFFCFVIPFF). Over 74 to 78 (YSVRF) the chain is Cytoplasmic. Residues 79-98 (ILLYLHILRSFYELNILLLY) traverse the membrane as a helical segment. Over 99 to 115 (GAENSRRQSPPGYYVIR) the chain is Extracellular.

It is found in the membrane. This is an uncharacterized protein from Saccharomyces cerevisiae (strain ATCC 204508 / S288c) (Baker's yeast).